The chain runs to 311 residues: MTLLLLGAVLLVAQPQLVHSHPAAPGPGLKQQELLRKVIILPEDTGEGTASNGSTQQLPQTIIIGVRKGGTRALLEMLSLHPDVAAAENEVHFFDWEEHYSQGLGWYLTQMPFSSPHQLTVEKTPAYFTSPKVPERIHSMNPTIRLLLILRDPSERVLSDYTQVLYNHLQKHKPYPPIEDLLMRDGRLNLDYKALNRSLYHAHMLNWLRFFPLGHIHIVDGDRLIRDPFPEIQKVERFLKLSPQINASNFYFNKTKGFYCLRDSGKDRCLHESKGRAHPQVDPKLLDKLHEYFHEPNKKFFKLVGRTFDWH.

Positions 1 to 20 (MTLLLLGAVLLVAQPQLVHS) are cleaved as a signal peptide. The N-linked (GlcNAc...) asparagine glycan is linked to Asn52. 3'-phosphoadenylyl sulfate-binding positions include 68-72 (KGGTR), Arg151, and Ser159. 3 N-linked (GlcNAc...) asparagine glycosylation sites follow: Asn196, Asn246, and Asn253. Position 259 (Tyr259) interacts with 3'-phosphoadenylyl sulfate. A disulfide bridge connects residues Cys260 and Cys269. Residue 274–278 (KGRAH) coordinates 3'-phosphoadenylyl sulfate.

The protein belongs to the sulfotransferase 1 family.

The protein resides in the golgi apparatus lumen. It catalyses the reaction alpha-D-glucosaminyl-[heparan sulfate](n) + 3'-phosphoadenylyl sulfate = 3-sulfo-alpha-D-glucosaminyl-[heparan sulfate](n) + adenosine 3',5'-bisphosphate + H(+). In terms of biological role, sulfotransferase that utilizes 3'-phospho-5'-adenylyl sulfate (PAPS) to catalyze the transfer of a sulfo group to position 3 of glucosamine residues in heparan. Catalyzes the rate limiting step in the biosynthesis of heparan sulfate (HSact). This modification is a crucial step in the biosynthesis of anticoagulant heparan sulfate as it completes the structure of the antithrombin pentasaccharide binding site. In Mus musculus (Mouse), this protein is Heparan sulfate glucosamine 3-O-sulfotransferase 1 (Hs3st1).